Consider the following 144-residue polypeptide: Ribonuclease VapC1 (144 aa).

Residues 6-132 (VFVDGNVIVD…SFYSPDIEVL (127 aa)) form the PINc domain. D9 and D102 together coordinate Mg(2+).

It belongs to the PINc/VapC protein family. The cofactor is Mg(2+).

Toxic component of a type II toxin-antitoxin (TA) system. An RNase. This is Ribonuclease VapC1 from Aquifex aeolicus (strain VF5).